Consider the following 108-residue polypeptide: Thioredoxin (108 aa).

Positions 2–108 constitute a Thioredoxin domain; that stretch reads NKIIELTDQN…LKEFLDENIN (107 aa). Residues C32 and C35 are joined by a disulfide bond.

It belongs to the thioredoxin family.

Functionally, participates in various redox reactions through the reversible oxidation of its active center dithiol to a disulfide and catalyzes dithiol-disulfide exchange reactions. The chain is Thioredoxin (trxA) from Buchnera aphidicola subsp. Acyrthosiphon pisum (strain APS) (Acyrthosiphon pisum symbiotic bacterium).